The chain runs to 153 residues: Ribosome maturation factor RimP (153 aa).

Belongs to the RimP family.

It localises to the cytoplasm. In terms of biological role, required for maturation of 30S ribosomal subunits. The chain is Ribosome maturation factor RimP from Trichormus variabilis (strain ATCC 29413 / PCC 7937) (Anabaena variabilis).